The sequence spans 917 residues: Autophagy-related protein 9 (917 aa).

The Cytoplasmic portion of the chain corresponds to 1–226 (MASNIFSRLV…AGFWCIIVQR (226 aa)). 2 disordered regions span residues 16–37 (RSFY…RAGI) and 119–177 (LLLS…QGRP). A helical membrane pass occupies residues 227 to 247 (ILELVNAAFVAVFLTFLSQCV). At 248 to 275 (DYHKLPHSKKMEDIIIPKCTQNMSLVWN) the chain is on the lumenal side. An N-linked (GlcNAc...) asparagine glycan is attached at Asn-269. A helical membrane pass occupies residues 276-296 (VGLWLFAIYFICRCFGLIIQL). At 297–442 (RQLKHLRDFY…RQLSQKLKSR (146 aa)) the chain is on the cytoplasmic side. The stretch at 443-463 (FFFAGLMIFVMSPFIALYLIL) is an intramembrane region. Over 464–539 (VYFLTYFHEF…ARTVSFITGS (76 aa)) the chain is Cytoplasmic. Residues 540–560 (IVAVLGLATIFDSEAFLTFEI) traverse the membrane as a helical segment. Residues 561–564 (TPDR) are Lumenal-facing. Residues 565–585 (SVLFYVSILATLWAVARGNIS) form a helical membrane-spanning segment. At 586–633 (DDNEVYDPEFAMKSIIEFTHYEPDHWRGRLHSTEVKNEFSELYKPRPQ) the chain is on the cytoplasmic side. N6-acetyllysine is present on Lys-621. The stretch at 634 to 654 (IFLEEILSILLTPLVLLVSLP) is an intramembrane region. At 655 to 917 (NSTDQIVDFF…FQQAHMHLRR (263 aa)) the chain is on the cytoplasmic side. Residues 854–895 (DARFGKLGDEDIDESGGALDESTWQTSPTKTLSRENSGANPQ) are disordered. Over residues 875–895 (STWQTSPTKTLSRENSGANPQ) the composition is skewed to polar residues.

Belongs to the ATG9 family. Homotrimer; forms a homotrimer with a central pore that forms a path between the two membrane leaflets. Interacts with HAT1. Acetylated by HAT1 at Lys-621, which increases the ability to bind vesicles during nutrient starvation induction. In terms of processing, phosphorylated by ATG1. ATG1 phosphorylation is required for preautophagosome elongation.

The protein localises to the preautophagosomal structure membrane. Its subcellular location is the cytoplasmic vesicle membrane. It localises to the vacuole membrane. It is found in the golgi apparatus membrane. The protein resides in the endoplasmic reticulum membrane. It catalyses the reaction a 1,2-diacyl-sn-glycero-3-phosphocholine(in) = a 1,2-diacyl-sn-glycero-3-phosphocholine(out). The catalysed reaction is a 1,2-diacyl-sn-glycero-3-phospho-L-serine(in) = a 1,2-diacyl-sn-glycero-3-phospho-L-serine(out). It carries out the reaction a 1,2-diacyl-sn-glycero-3-phosphoethanolamine(in) = a 1,2-diacyl-sn-glycero-3-phosphoethanolamine(out). The enzyme catalyses a 1,2-diacyl-sn-glycero-3-phospho-(1D-myo-inositol-3-phosphate)(in) = a 1,2-diacyl-sn-glycero-3-phospho-(1D-myo-inositol-3-phosphate)(out). Its function is as follows. Phospholipid scramblase involved in autophagy and cytoplasm to vacuole transport (Cvt) vesicle formation. Cycles between the preautophagosomal structure/phagophore assembly site (PAS) and the cytoplasmic vesicle pool and supplies membrane for the growing autophagosome. Lipid scramblase activity plays a key role in preautophagosomal structure/phagophore assembly by distributing the phospholipids that arrive through ATG2 from the cytoplasmic to the luminal leaflet of the bilayer, thereby driving autophagosomal membrane expansion. Required for mitophagy. Also involved in endoplasmic reticulum-specific autophagic process and is essential for the survival of cells subjected to severe ER stress. Different machineries are required for anterograde trafficking to the PAS during either the Cvt pathway or bulk autophagy and for retrograde trafficking. Plays a role in appressorium formation and pathogenicity. The chain is Autophagy-related protein 9 from Pyricularia oryzae (strain 70-15 / ATCC MYA-4617 / FGSC 8958) (Rice blast fungus).